The following is a 392-amino-acid chain: Probable tRNA sulfurtransferase (392 aa).

In terms of domain architecture, THUMP spans 59-167; it reads ADITDRVKKV…DQAFVFSNKI (109 aa). Residues 184–185, 209–210, arginine 266, glycine 288, and glutamine 297 each bind ATP; these read LL and HF.

It belongs to the ThiI family.

The protein localises to the cytoplasm. It catalyses the reaction [ThiI sulfur-carrier protein]-S-sulfanyl-L-cysteine + a uridine in tRNA + 2 reduced [2Fe-2S]-[ferredoxin] + ATP + H(+) = [ThiI sulfur-carrier protein]-L-cysteine + a 4-thiouridine in tRNA + 2 oxidized [2Fe-2S]-[ferredoxin] + AMP + diphosphate. It carries out the reaction [ThiS sulfur-carrier protein]-C-terminal Gly-Gly-AMP + S-sulfanyl-L-cysteinyl-[cysteine desulfurase] + AH2 = [ThiS sulfur-carrier protein]-C-terminal-Gly-aminoethanethioate + L-cysteinyl-[cysteine desulfurase] + A + AMP + 2 H(+). It functions in the pathway cofactor biosynthesis; thiamine diphosphate biosynthesis. Functionally, catalyzes the ATP-dependent transfer of a sulfur to tRNA to produce 4-thiouridine in position 8 of tRNAs, which functions as a near-UV photosensor. Also catalyzes the transfer of sulfur to the sulfur carrier protein ThiS, forming ThiS-thiocarboxylate. This is a step in the synthesis of thiazole, in the thiamine biosynthesis pathway. The sulfur is donated as persulfide by IscS. This is Probable tRNA sulfurtransferase from Alkaliphilus oremlandii (strain OhILAs) (Clostridium oremlandii (strain OhILAs)).